The following is a 106-amino-acid chain: UPF0060 membrane protein R01043 (106 aa).

A run of 4 helical transmembrane segments spans residues 5-25 (AIYFLAALAEITGCFAFWSWL), 31-51 (ALWLIPGMASLALFAWLLTMV), 61-81 (AAYGGVYIVASLSWLWLAEGV), and 85-105 (HWDMTGAAVALAGSAIILAGP).

The protein belongs to the UPF0060 family.

Its subcellular location is the cell inner membrane. The polypeptide is UPF0060 membrane protein R01043 (Rhizobium meliloti (strain 1021) (Ensifer meliloti)).